Reading from the N-terminus, the 561-residue chain is Asparagine synthetase [glutamine-hydrolyzing] (561 aa).

Cysteine 2 acts as the For GATase activity in catalysis. The Glutamine amidotransferase type-2 domain maps to 2–191 (CGIWALFGSD…PGHYEVLDLK (190 aa)). L-glutamine contacts are provided by residues 49-53 (RLAVV), 75-77 (NGE), and aspartate 97. The Asparagine synthetase domain occupies 213–536 (HALYDNVEKL…PGRADWLSHY (324 aa)). ATP is bound by residues leucine 256, isoleucine 288, and 363 to 364 (SG). Position 385 is an N6-acetyllysine (lysine 385). Threonine 545 carries the post-translational modification Phosphothreonine. At serine 557 the chain carries Phosphoserine.

It catalyses the reaction L-aspartate + L-glutamine + ATP + H2O = L-asparagine + L-glutamate + AMP + diphosphate + H(+). The protein operates within amino-acid biosynthesis; L-asparagine biosynthesis; L-asparagine from L-aspartate (L-Gln route): step 1/1. The sequence is that of Asparagine synthetase [glutamine-hydrolyzing] (ASNS) from Homo sapiens (Human).